The primary structure comprises 45 residues: Iota-conotoxin-like R11.12 (45 aa).

4 disulfides stabilise this stretch: cysteine 5–cysteine 19, cysteine 12–cysteine 22, cysteine 18–cysteine 27, and cysteine 21–cysteine 36. Position 43 is a D-leucine (leucine 43). Position 45 (arginine 45) is a propeptide, removed by a carboxypeptidase.

The protein belongs to the conotoxin I1 superfamily. As to expression, expressed by the venom duct.

The protein localises to the secreted. Its function is as follows. Iota-conotoxins bind to voltage-gated sodium channels (Nav) and act as agonists by shifting the voltage-dependence of activation to more hyperpolarized levels. Produces general excitatory symptoms. In Conus radiatus (Rayed cone), this protein is Iota-conotoxin-like R11.12.